Consider the following 126-residue polypeptide: Holo-[acyl-carrier-protein] synthase (126 aa).

Mg(2+) is bound by residues Asp8 and Glu57.

Belongs to the P-Pant transferase superfamily. AcpS family. Mg(2+) is required as a cofactor.

The protein localises to the cytoplasm. It carries out the reaction apo-[ACP] + CoA = holo-[ACP] + adenosine 3',5'-bisphosphate + H(+). Transfers the 4'-phosphopantetheine moiety from coenzyme A to a Ser of acyl-carrier-protein. The polypeptide is Holo-[acyl-carrier-protein] synthase (Vibrio cholerae serotype O1 (strain ATCC 39315 / El Tor Inaba N16961)).